A 1507-amino-acid polypeptide reads, in one-letter code: DNA-directed RNA polymerase subunit beta' (1507 aa).

Cys-71, Cys-73, Cys-86, and Cys-89 together coordinate Zn(2+). 3 residues coordinate Mg(2+): Asp-470, Asp-472, and Asp-474. Positions 800, 874, 881, and 884 each coordinate Zn(2+).

Belongs to the RNA polymerase beta' chain family. In terms of assembly, the RNAP catalytic core consists of 2 alpha, 1 beta, 1 beta' and 1 omega subunit. When a sigma factor is associated with the core the holoenzyme is formed, which can initiate transcription. Requires Mg(2+) as cofactor. The cofactor is Zn(2+).

The catalysed reaction is RNA(n) + a ribonucleoside 5'-triphosphate = RNA(n+1) + diphosphate. Its function is as follows. DNA-dependent RNA polymerase catalyzes the transcription of DNA into RNA using the four ribonucleoside triphosphates as substrates. The protein is DNA-directed RNA polymerase subunit beta' of Nitratiruptor sp. (strain SB155-2).